A 198-amino-acid chain; its full sequence is Probable molybdenum cofactor guanylyltransferase (198 aa).

GTP-binding positions include 9 to 11 (LAG), lysine 22, aspartate 66, and aspartate 95. Aspartate 95 is a Mg(2+) binding site.

This sequence belongs to the MobA family. The cofactor is Mg(2+).

It localises to the cytoplasm. The catalysed reaction is Mo-molybdopterin + GTP + H(+) = Mo-molybdopterin guanine dinucleotide + diphosphate. Functionally, transfers a GMP moiety from GTP to Mo-molybdopterin (Mo-MPT) cofactor (Moco or molybdenum cofactor) to form Mo-molybdopterin guanine dinucleotide (Mo-MGD) cofactor. In Clostridium perfringens (strain 13 / Type A), this protein is Probable molybdenum cofactor guanylyltransferase.